Reading from the N-terminus, the 163-residue chain is Protein US34 (163 aa).

The N-terminal stretch at 1 to 22 (MNLEQLINVLGLLVWIAARAVS) is a signal peptide.

This sequence belongs to the HHV-5 US34 protein family.

The polypeptide is Protein US34 (US34) (Homo sapiens (Human)).